The following is a 576-amino-acid chain: Epsin-1 (576 aa).

Residues Arg-8, Lys-11, Arg-25, Asn-30, Arg-63, and His-73 each coordinate a 1,2-diacyl-sn-glycero-3-phospho-(1D-myo-inositol-4,5-bisphosphate). One can recognise an ENTH domain in the interval 12–144 (NIVHNYSEAE…RDEDRLREER (133 aa)). A disordered region spans residues 149–185 (KTKEKLAQTATASSAAVGSGPPPEAEQAWPQSSGEEE). The span at 157 to 167 (TATASSAAVGS) shows a compositional bias: low complexity. 3 consecutive UIM domains span residues 183–202 (EEEL…ADQP), 208–227 (EDDA…HDKE), and 233–252 (GDDL…TGGK). Over residues 265 to 296 (TAPAPAPTTDPWGGPAPMAAAVPTAAPTSDPW) the composition is skewed to low complexity. The segment at 265–404 (TAPAPAPTTD…GGFDTEPDEF (140 aa)) is disordered. A run of 8 repeats spans residues 274–276 (DPW), 294–296 (DPW), 306–308 (DPW), 319–321 (DPW), 332–334 (DPW), 349–351 (DPW), 367–369 (DPW), and 377–379 (DPW). The interval 274-379 (DPWGGPAPMA…TPAPAFSDPW (106 aa)) is 8 X 3 AA repeats of [ED]-P-W. A compositionally biased stretch (pro residues) spans 297–314 (GGPPVPPAADPWGGPAPT). Low complexity predominate over residues 332–368 (DPWGGTPAPAAGEGPTPDPWGSSDGGVPVSGPSASDP). A Phosphoserine; by CDK1 modification is found at Ser-382. A [DE]-X(1,2)-F-X-X-[FL]-X-X-X-R motif motif is present at residues 402-411 (DEFSDFDRLR). Phosphoserine occurs at positions 419, 420, 435, 447, and 454. The tract at residues 448–576 (LAEAVGSPPP…PAPNTNPFLL (129 aa)) is disordered. Residues 454-468 (SPPPAATPTPTPPTR) are compositionally biased toward pro residues. Thr-460, Thr-464, and Thr-470 each carry phosphothreonine. At Ser-473 the chain carries Phosphoserine. Residue Thr-494 is modified to Phosphothreonine. Repeat copies occupy residues 502 to 504 (NPF) and 518 to 520 (NPF). Positions 502–574 (NPFLPGGGPA…GPPAPNTNPF (73 aa)) are 3 X 3 AA repeats of N-P-F. Arg-534 is subject to Omega-N-methylarginine. The segment covering 557 to 570 (GLPPMMPPGPPAPN) has biased composition (pro residues). Copy 3 of the repeat occupies 572–574 (NPF).

The protein belongs to the epsin family. As to quaternary structure, monomer. Binds clathrin, ZBTB16/ZNF145 and ITSN1. Binds ubiquitinated proteins. Binds AP2A1 and AP2A2. Interacts with RALBP1 in a complex also containing NUMB and TFAP2A during interphase and mitosis. Interacts with AP2B1. Interacts with UBQLN2. Interacts with REPS2; the interaction is direct. Interacts with EPS15; the interaction is direct. Interacts with ENTREP1. In terms of processing, phosphorylated on serine and/or threonine residues in mitotic cells. Phosphorylation reduces interaction with REPS2, AP-2 and the membrane fraction. Depolarization of synaptosomes results in dephosphorylation. Ubiquitinated.

It is found in the cytoplasm. It localises to the cell membrane. Its subcellular location is the nucleus. The protein localises to the membrane. The protein resides in the clathrin-coated pit. Its function is as follows. Binds to membranes enriched in phosphatidylinositol 4,5-bisphosphate (PtdIns(4,5)P2). Modifies membrane curvature and facilitates the formation of clathrin-coated invaginations. Regulates receptor-mediated endocytosis. The protein is Epsin-1 (EPN1) of Homo sapiens (Human).